The chain runs to 156 residues: MKELTHVDEKGVKMVEVGHKREVLRKAVAKGRIRLRPETIELIKAGKTKKGNVIATAQIAGILAVKKTPELIPLCHPIPLTGVDISFEFGEDYIEATCEVRATYKTGVEMEALMGVTLALLTIWDMVKAVEKDEQGQYPFTRIEGIHVVEKVKEEG.

Substrate-binding positions include 74 to 76 (LCH) and 110 to 111 (ME). Residue D125 is part of the active site.

Belongs to the MoaC family. In terms of assembly, homohexamer; trimer of dimers.

The catalysed reaction is (8S)-3',8-cyclo-7,8-dihydroguanosine 5'-triphosphate = cyclic pyranopterin phosphate + diphosphate. Its pathway is cofactor biosynthesis; molybdopterin biosynthesis. Its function is as follows. Catalyzes the conversion of (8S)-3',8-cyclo-7,8-dihydroguanosine 5'-triphosphate to cyclic pyranopterin monophosphate (cPMP). The polypeptide is Probable cyclic pyranopterin monophosphate synthase (Thermococcus onnurineus (strain NA1)).